The following is a 321-amino-acid chain: Homoserine O-succinyltransferase (321 aa).

C142 (acyl-thioester intermediate) is an active-site residue. 2 residues coordinate substrate: K163 and S192. Residue H235 is the Proton acceptor of the active site. E237 is an active-site residue. A substrate-binding site is contributed by R249.

This sequence belongs to the MetA family.

The protein resides in the cytoplasm. The enzyme catalyses L-homoserine + succinyl-CoA = O-succinyl-L-homoserine + CoA. The protein operates within amino-acid biosynthesis; L-methionine biosynthesis via de novo pathway; O-succinyl-L-homoserine from L-homoserine: step 1/1. Its function is as follows. Transfers a succinyl group from succinyl-CoA to L-homoserine, forming succinyl-L-homoserine. This chain is Homoserine O-succinyltransferase, found in Shewanella loihica (strain ATCC BAA-1088 / PV-4).